A 367-amino-acid chain; its full sequence is Dual specificity protein phosphatase 1 (367 aa).

The Rhodanese domain occupies 20–137 (RAAQCLLLDC…FSASCPELCS (118 aa)). The Tyrosine-protein phosphatase domain maps to 173 to 314 (GPVEILPFLY…LLQFESQVLA (142 aa)). Cysteine 258 serves as the catalytic Phosphocysteine intermediate. Phosphoserine; by MAPK1 and MAPK3 is present on residues serine 359 and serine 364.

This sequence belongs to the protein-tyrosine phosphatase family. Non-receptor class dual specificity subfamily. Phosphorylation at Ser-359 and Ser-364 by MAPK1/ERK2 and MAPK3/ERK1 reduces its rate of degradation. Post-translationally, 'Lys-48'-linked polyubiquitinated by NEURL3, leading to proteasomal degradation. As to expression, expressed at high levels in the lung, liver placenta and pancreas. Moderate levels seen in the heart and skeletal muscle. Lower levels found in the brain and kidney.

It is found in the nucleus. It catalyses the reaction O-phospho-L-tyrosyl-[protein] + H2O = L-tyrosyl-[protein] + phosphate. The catalysed reaction is O-phospho-L-seryl-[protein] + H2O = L-seryl-[protein] + phosphate. It carries out the reaction O-phospho-L-threonyl-[protein] + H2O = L-threonyl-[protein] + phosphate. In terms of biological role, dual specificity phosphatase that dephosphorylates MAP kinase MAPK1/ERK2 on both 'Thr-183' and 'Tyr-185', regulating its activity during the meiotic cell cycle. This is Dual specificity protein phosphatase 1 from Homo sapiens (Human).